The sequence spans 112 residues: Putative iron-sulfur cluster insertion protein ErpA (112 aa).

3 residues coordinate iron-sulfur cluster: Cys40, Cys104, and Cys106.

It belongs to the HesB/IscA family. As to quaternary structure, homodimer. Iron-sulfur cluster serves as cofactor.

Required for insertion of 4Fe-4S clusters. The polypeptide is Putative iron-sulfur cluster insertion protein ErpA (Neisseria gonorrhoeae (strain ATCC 700825 / FA 1090)).